The primary structure comprises 367 residues: 3-methyl-2-oxobutanoate dehydrogenase subunit alpha (367 aa).

Thiamine diphosphate-binding positions include 99–101 (QYR), 141–142 (PI), 170–176 (GDGATSE), 200–204 (NQWAI), and histidine 269. Residue tyrosine 100 participates in substrate binding. Mg(2+) contacts are provided by aspartate 171 and asparagine 200.

In terms of assembly, heteromer of E1 alpha (BkdA) and beta (BkdB) subunits. Part of the BCKADH complex, consisting of multiple copies of BkdA/BkdB (E1), BkdC (E2) and Lpd (E3). Requires Mg(2+) as cofactor. Thiamine diphosphate is required as a cofactor.

It carries out the reaction N(6)-[(R)-lipoyl]-L-lysyl-[protein] + 3-methyl-2-oxobutanoate + H(+) = N(6)-[(R)-S(8)-2-methylpropanoyldihydrolipoyl]-L-lysyl-[protein] + CO2. Functionally, component of the branched-chain alpha-ketoacid dehydrogenase (BCKADH) complex, that catalyzes the overall conversion of branched-chain alpha-ketoacids to acyl-CoA and CO(2). In Mycobacterium tuberculosis (strain CDC 1551 / Oshkosh), this protein is 3-methyl-2-oxobutanoate dehydrogenase subunit alpha (bkdA).